A 353-amino-acid polypeptide reads, in one-letter code: Ornithine racemase (353 aa).

Lys-35 serves as the catalytic Proton acceptor. Lys-35 carries the post-translational modification N6-(pyridoxal phosphate)lysine. Position 128 (Arg-128) interacts with substrate.

It belongs to the alanine racemase family. As to quaternary structure, homodimer. It depends on pyridoxal 5'-phosphate as a cofactor.

It catalyses the reaction L-ornithine = D-ornithine. Its function is as follows. Involved in the ornithine fermentation pathway. Catalyzes the conversion of L-ornithine to D-ornithine. OR could also racemize basic amino acids such as lysine and arginine. Serine, asparagine and alanine could be also converted by OR, but at a lower rate. The sequence is that of Ornithine racemase from Acetoanaerobium sticklandii (strain ATCC 12662 / DSM 519 / JCM 1433 / CCUG 9281 / NCIMB 10654 / HF) (Clostridium sticklandii).